A 258-amino-acid chain; its full sequence is Ditrans,polycis-undecaprenyl-diphosphate synthase ((2E,6E)-farnesyl-diphosphate specific) (258 aa).

D24 is a catalytic residue. D24 is a binding site for Mg(2+). Substrate-binding positions include 25-28 (GNGR), W29, R37, H41, and 69-71 (SSE). The active-site Proton acceptor is N72. Substrate-binding positions include W73, R75, R192, and 198 to 200 (RIS). Residue E211 coordinates Mg(2+).

This sequence belongs to the UPP synthase family. In terms of assembly, homodimer. It depends on Mg(2+) as a cofactor.

It catalyses the reaction 8 isopentenyl diphosphate + (2E,6E)-farnesyl diphosphate = di-trans,octa-cis-undecaprenyl diphosphate + 8 diphosphate. Its function is as follows. Catalyzes the sequential condensation of isopentenyl diphosphate (IPP) with (2E,6E)-farnesyl diphosphate (E,E-FPP) to yield (2Z,6Z,10Z,14Z,18Z,22Z,26Z,30Z,34E,38E)-undecaprenyl diphosphate (di-trans,octa-cis-UPP). UPP is the precursor of glycosyl carrier lipid in the biosynthesis of bacterial cell wall polysaccharide components such as peptidoglycan and lipopolysaccharide. The chain is Ditrans,polycis-undecaprenyl-diphosphate synthase ((2E,6E)-farnesyl-diphosphate specific) from Xanthomonas campestris pv. campestris (strain ATCC 33913 / DSM 3586 / NCPPB 528 / LMG 568 / P 25).